A 197-amino-acid chain; its full sequence is UPF0301 protein BAV3012 (197 aa).

It belongs to the UPF0301 (AlgH) family.

This Bordetella avium (strain 197N) protein is UPF0301 protein BAV3012.